The chain runs to 956 residues: Thrombospondin-3 (956 aa).

Residues 1–21 (MEKPELWGVLALLLLCSYTCG) form the signal peptide. In terms of domain architecture, Laminin G-like spans 22 to 193 (SQDLQVIDLL…VESMKIILGG (172 aa)). Cystine bridges form between Cys-278/Cys-289, Cys-283/Cys-300, Cys-303/Cys-314, Cys-320/Cys-332, Cys-326/Cys-341, Cys-344/Cys-368, Cys-374/Cys-388, Cys-382/Cys-397, Cys-400/Cys-412, Cys-418/Cys-432, Cys-426/Cys-442, Cys-444/Cys-455, Cys-471/Cys-478, Cys-483/Cys-503, Cys-519/Cys-539, Cys-542/Cys-562, Cys-578/Cys-598, Cys-601/Cys-621, Cys-639/Cys-659, Cys-679/Cys-699, and Cys-715/Cys-936. Residue Asn-310 is glycosylated (N-linked (GlcNAc...) asparagine). The region spanning 316 to 354 (DINECAHADPCFPGSSCINTMPGFHCEACPPGYKGTRVS) is the EGF-like 1; calcium-binding domain. Positions 370-410 (DIDECNDGNNGGCDPNSICTNTVGSFKCGPCRLGFLGNQSQ) constitute an EGF-like 2; calcium-binding domain. N-linked (GlcNAc...) asparagine glycosylation occurs at Asn-407. The EGF-like 3 domain occupies 414-456 (PARTCHSPAHSPCHIHAHCLFERNGAVSCQCNVGWAGNGNVCG). TSP type-3 repeat units lie at residues 457–491 (PDTD…NSGQ), 492–527 (EDAD…NKDQ), 528–550 (QNSD…NNDQ), 551–586 (KDTD…NPLQ), 587–609 (TDRD…NPTQ), 610–647 (TDAD…NSSQ), 648–687 (LDSD…NPNQ), and 688–723 (KDSD…EVTL). Disordered stretches follow at residues 518–537 (NCRL…SFGD) and 546–699 (PNND…GDVC). Over residues 555 to 568 (GNGEGDACDNDVDG) the composition is skewed to acidic residues. Acidic residues predominate over residues 612 to 628 (ADSDLVGDVCDTNEDSD). Asn-644 carries N-linked (GlcNAc...) asparagine glycosylation. The segment covering 650 to 667 (SDNDGLGDECDGDDDNDG) has biased composition (acidic residues). One can recognise a TSP C-terminal domain in the interval 727-941 (RAYQTVILDP…LQYRCNDTVP (215 aa)). Asn-937 carries N-linked (GlcNAc...) asparagine glycosylation.

It belongs to the thrombospondin family. Oligomer; disulfide-linked. Brain, lung and cartilage.

In terms of biological role, adhesive glycoprotein that mediates cell-to-cell and cell-to-matrix interactions. Can bind to fibrinogen, fibronectin, laminin and type V collagen. This chain is Thrombospondin-3 (Thbs3), found in Mus musculus (Mouse).